The primary structure comprises 100 residues: MTEVGWWKLTFLRKKKSTPKVLYEIPDTYAQTEGGAEPPGPDAGDPHSDFNSRLEKIVDKNTKGKHVKVSNSGRFKEKKKVRAMLAENPNLFDDRENKGQ.

Positions 29 to 51 (YAQTEGGAEPPGPDAGDPHSDFN) are disordered.

Belongs to the PRR15 family.

The polypeptide is Proline-rich protein 15-like protein (Prr15l) (Mus musculus (Mouse)).